The primary structure comprises 1488 residues: Chromosome partition protein MukB (1488 aa).

34-41 (GGNGAGKS) provides a ligand contact to ATP. Coiled coils occupy residues 326 to 418 (LEAD…QYNQ), 444 to 472 (LDTFQAKEQEATEKLLSLEQKMSVAQTAH), and 509 to 602 (RHLA…QRAP). The segment at 666–783 (PGGAEDQRLN…SLPIFGRAAR (118 aa)) is flexible hinge. Coiled-coil stretches lie at residues 835 to 923 (EAEI…AKLE), 977 to 1116 (EMLS…AKAG), and 1209 to 1265 (VEAI…LQSV). The tract at residues 1049–1074 (ADSGAEERARQRRDELHAQLSNNRSR) is disordered. A compositionally biased stretch (basic and acidic residues) spans 1051–1065 (SGAEERARQRRDELH).

It belongs to the SMC family. MukB subfamily. As to quaternary structure, homodimerization via its hinge domain. Binds to DNA via its C-terminal region. Interacts, and probably forms a ternary complex, with MukE and MukF via its C-terminal region. The complex formation is stimulated by calcium or magnesium. Interacts with tubulin-related protein FtsZ.

It is found in the cytoplasm. Its subcellular location is the nucleoid. Its function is as follows. Plays a central role in chromosome condensation, segregation and cell cycle progression. Functions as a homodimer, which is essential for chromosome partition. Involved in negative DNA supercoiling in vivo, and by this means organize and compact chromosomes. May achieve or facilitate chromosome segregation by condensation DNA from both sides of a centrally located replisome during cell division. In Salmonella schwarzengrund (strain CVM19633), this protein is Chromosome partition protein MukB.